Here is a 208-residue protein sequence, read N- to C-terminus: Ribosomal RNA small subunit methyltransferase G (208 aa).

S-adenosyl-L-methionine contacts are provided by residues glycine 77, leucine 82, 128–129 (VE), and arginine 142.

Belongs to the methyltransferase superfamily. RNA methyltransferase RsmG family.

It localises to the cytoplasm. It catalyses the reaction guanosine(527) in 16S rRNA + S-adenosyl-L-methionine = N(7)-methylguanosine(527) in 16S rRNA + S-adenosyl-L-homocysteine. Its function is as follows. Specifically methylates the N7 position of guanine in position 527 of 16S rRNA. The polypeptide is Ribosomal RNA small subunit methyltransferase G (Chromohalobacter salexigens (strain ATCC BAA-138 / DSM 3043 / CIP 106854 / NCIMB 13768 / 1H11)).